We begin with the raw amino-acid sequence, 562 residues long: MSGTILENLSGRKLSILVASLLLCQVFCFLLGGLYAPLPAGHVTVLGSLCREDHTRQNDTSFLLYSRGAGACIPVSREEVERDPMKMANELVHVFQMPLPRDLRDLDYSRWQQNLIGVLQVEFGYDSTSELREPPKELQLTIDMRLAYRNKGDPDQAWKLYAHGVEQRYLDCVTAHVGPTETLYSCDMIPLFELGALHHSFYLLNLRFPLDTPRQMNLQFGHMHDLTLTAIHQNGGFTQIWLMLKTVLFPFVVGIMIWFWRRVHLLQRSPALLEYMLIYLGGALTFLNLPLEYLSLVVEMPYMLLLSDIRQGIFYAMLLSFWLVFAGEHMLIQDAPNKSTIRSRYWKHLSAVVVGCISLFVFDICERGVQLRNPFYSIWTTPLGAKVAMTFIILAGVSAAIYFLFLCYMIWKVFRNIGDKRTSLPSMSQARRLHYEGLIYRFKFLMLATLLCAALTVAGFIMGQMAEGQWQWNDNVEIQLTSAFLTGVYGMWNIYIFALLILYAPSHKQWPTMHHSDETTQSNENIVASAASEEIEFSHLPSDSNPSEISSLTSFTRKVAFD.

Residues Met-1 to Lys-13 lie on the Cytoplasmic side of the membrane. Residues Leu-14–Leu-34 traverse the membrane as a helical segment. Residues Tyr-35–Gln-239 lie on the Lumenal side of the membrane. The N-linked (GlcNAc...) asparagine glycan is linked to Asn-58. Residues Ile-240 to Trp-260 form a helical membrane-spanning segment. Residues Arg-261–Pro-270 lie on the Cytoplasmic side of the membrane. The chain crosses the membrane as a helical span at residues Ala-271–Leu-291. The Lumenal segment spans residues Glu-292 to Gln-311. A helical transmembrane segment spans residues Gly-312–Ile-332. Topologically, residues Gln-333–Arg-344 are cytoplasmic. The helical transmembrane segment at Tyr-345 to Cys-365 threads the bilayer. Topologically, residues Glu-366 to Thr-390 are lumenal. Residues Phe-391 to Trp-411 traverse the membrane as a helical segment. Residues Lys-412–Arg-441 are Cytoplasmic-facing. The helical transmembrane segment at Phe-442–Met-462 threads the bilayer. Residues Gly-463–Ser-482 lie on the Lumenal side of the membrane. The chain crosses the membrane as a helical span at residues Ala-483–Tyr-503. The Cytoplasmic segment spans residues Ala-504 to Asp-562. Positions His-539–Asp-562 are disordered. The segment covering Pro-541–Thr-556 has biased composition (polar residues).

The protein belongs to the wntless family. In terms of assembly, interacts with wg; in the Golgi. Interacts with Vps35, a component of the retromer complex; wls stability is regulated by Vps35.

It is found in the presynaptic cell membrane. It localises to the postsynaptic cell membrane. The protein localises to the cell membrane. The protein resides in the endoplasmic reticulum membrane. Its subcellular location is the endosome membrane. It is found in the golgi apparatus membrane. Functionally, a segment polarity gene required for wingless (wg)-dependent patterning processes, acting in both wg-sending cells and wg-target cells. In non-neuronal cells wls directs wg secretion. The wls traffic loop encompasses the Golgi, the cell surface, an endocytic compartment and a retrograde route leading back to the Golgi, and involves clathrin-mediated endocytosis and the retromer complex (a conserved protein complex consisting of Vps35 and Vps26). In neuronal cells (the larval motorneuron NMJ), the wg signal moves across the synapse via the release of wls-containing exosome-like vesicles. Postsynaptic wls is required for the trafficking of fz2 through the fz2-interacting protein Grip. The sequence is that of Protein wntless from Drosophila ananassae (Fruit fly).